Here is a 348-residue protein sequence, read N- to C-terminus: Phosphoribosylformylglycinamidine cyclo-ligase (348 aa).

This sequence belongs to the AIR synthase family.

It is found in the cytoplasm. It carries out the reaction 2-formamido-N(1)-(5-O-phospho-beta-D-ribosyl)acetamidine + ATP = 5-amino-1-(5-phospho-beta-D-ribosyl)imidazole + ADP + phosphate + H(+). It participates in purine metabolism; IMP biosynthesis via de novo pathway; 5-amino-1-(5-phospho-D-ribosyl)imidazole from N(2)-formyl-N(1)-(5-phospho-D-ribosyl)glycinamide: step 2/2. This chain is Phosphoribosylformylglycinamidine cyclo-ligase, found in Cereibacter sphaeroides (strain ATCC 17025 / ATH 2.4.3) (Rhodobacter sphaeroides).